We begin with the raw amino-acid sequence, 782 residues long: Phosphoribosylformylglycinamidine synthase subunit PurL (782 aa).

His50 is an active-site residue. ATP-binding residues include Tyr53 and Lys92. Glu94 serves as a coordination point for Mg(2+). Substrate contacts are provided by residues 95–98 and Arg117; that span reads SHNH. His96 (proton acceptor) is an active-site residue. Position 118 (Asp118) interacts with Mg(2+). Gln241 lines the substrate pocket. Asp269 contacts Mg(2+). 313–315 is a binding site for substrate; it reads ESQ. ATP contacts are provided by Asp520 and Gly557. Position 558 (Asn558) interacts with Mg(2+). Ser560 is a binding site for substrate.

This sequence belongs to the FGAMS family. Monomer. Part of the FGAM synthase complex composed of 1 PurL, 1 PurQ and 2 PurS subunits.

The protein localises to the cytoplasm. It catalyses the reaction N(2)-formyl-N(1)-(5-phospho-beta-D-ribosyl)glycinamide + L-glutamine + ATP + H2O = 2-formamido-N(1)-(5-O-phospho-beta-D-ribosyl)acetamidine + L-glutamate + ADP + phosphate + H(+). It participates in purine metabolism; IMP biosynthesis via de novo pathway; 5-amino-1-(5-phospho-D-ribosyl)imidazole from N(2)-formyl-N(1)-(5-phospho-D-ribosyl)glycinamide: step 1/2. In terms of biological role, part of the phosphoribosylformylglycinamidine synthase complex involved in the purines biosynthetic pathway. Catalyzes the ATP-dependent conversion of formylglycinamide ribonucleotide (FGAR) and glutamine to yield formylglycinamidine ribonucleotide (FGAM) and glutamate. The FGAM synthase complex is composed of three subunits. PurQ produces an ammonia molecule by converting glutamine to glutamate. PurL transfers the ammonia molecule to FGAR to form FGAM in an ATP-dependent manner. PurS interacts with PurQ and PurL and is thought to assist in the transfer of the ammonia molecule from PurQ to PurL. The chain is Phosphoribosylformylglycinamidine synthase subunit PurL from Cyanothece sp. (strain PCC 7425 / ATCC 29141).